We begin with the raw amino-acid sequence, 350 residues long: Trans-enoyl reductase iliB (350 aa).

50–53 (VDGK) serves as a coordination point for NADP(+). 145–152 (AAIATVGL) is a binding site for substrate. NADP(+) contacts are provided by residues 177 to 180 (SAAS), tyrosine 195, and 242 to 243 (LD). 262–266 (TPTQF) contributes to the substrate binding site. Residue 331–332 (IK) participates in NADP(+) binding.

Belongs to the zinc-containing alcohol dehydrogenase family. Monomer.

The enzyme catalyses N-[(4E,6E,10S,12Z,14E)-6,10-dimethyl-3-oxohexadeca-4,6,12,14-tetraenoyl]-L-tyrosyl-[ACP] = (3E,5S)-3-[(2E,4E,8S,10E,12Z)-1-hydroxy-4,8-dimethyltetradeca-2,4,10,12-tetraen-1-ylidene]-5-[(4-hydroxyphenyl)methyl]pyrrolidine-2,4-dione + holo-[ACP] + H(+). It participates in mycotoxin biosynthesis. Functionally, trans-enoyl reductase; part of the gene cluster that mediates the biosynthesis of ilicicolin H, a 4-hydroxy-2-pyridonealkaloid that has potent and broad antifungal activities by inhibiting the mitochondrial respiration chain. IliB collaborates with the hybrid PKS-NRPS synthetase iliA to assemble the backbone of ilicicolin H. The PKS portion of iliA and trans-acting enoyl reductase iliB work together to construct an octaketide, and two methyl groups are introduced by the MT domain of iliA during the chain assembly. The nascent chain is then condensed with tyrosine, catalyzed by the iliA C domain, and the resulting PKS-NRPS hybrid is offloaded by the iliA RED domain to form an advanced tetramic acid intermediate. The biosynthesis of ilicicolin H starts with formation of the tetramic acid by the hybrid PKS-NRPS synthetase iliA with the partnering trans-enoyl reductase iliB since iliA lacks a designated enoylreductase (ER) domain. The cytochrome P450 monooxygenase iliC then catalyzes the ring expansion of the tetramate to the acyclic 2-pyridone. The pericyclase iliD further converts the acyclic 2-pyridone into 8-epi-ilicicolin H. 8-epi-ilicicolin H might then spontaneously convert to ilicicolin H since ilicicolin H is produced in the absence of the epimerase iliE, in contrast to what was observed for the Talaromyces variabilis ilicolin H biosynthetic pathway. The chain is Trans-enoyl reductase iliB from Hypocrea jecorina (strain QM6a) (Trichoderma reesei).